Here is a 160-residue protein sequence, read N- to C-terminus: Phosphopantetheine adenylyltransferase (160 aa).

Thr10 serves as a coordination point for substrate. ATP contacts are provided by residues 10 to 11 (TF) and His18. The substrate site is built by Lys42, Leu74, and Arg88. Residues 89–91 (GLR), Glu99, and 124–130 (NSFISST) each bind ATP.

The protein belongs to the bacterial CoaD family. As to quaternary structure, homohexamer. Requires Mg(2+) as cofactor.

It is found in the cytoplasm. The enzyme catalyses (R)-4'-phosphopantetheine + ATP + H(+) = 3'-dephospho-CoA + diphosphate. It participates in cofactor biosynthesis; coenzyme A biosynthesis; CoA from (R)-pantothenate: step 4/5. In terms of biological role, reversibly transfers an adenylyl group from ATP to 4'-phosphopantetheine, yielding dephospho-CoA (dPCoA) and pyrophosphate. The sequence is that of Phosphopantetheine adenylyltransferase from Aeromonas hydrophila subsp. hydrophila (strain ATCC 7966 / DSM 30187 / BCRC 13018 / CCUG 14551 / JCM 1027 / KCTC 2358 / NCIMB 9240 / NCTC 8049).